The following is an 868-amino-acid chain: Muscle, skeletal receptor tyrosine protein kinase (868 aa).

The N-terminal stretch at 1 to 21 (MRELVNIPLLQMLTLVAFSGT) is a signal peptide. Residues 22 to 494 (EKLPKAPVIT…FAVSPAYSMT (473 aa)) are Extracellular-facing. Ig-like domains follow at residues 28–116 (PVIT…GALQ), 121–205 (PKIT…KLVK), and 212–302 (ARIL…ATVS). 3 cysteine pairs are disulfide-bonded: cysteine 49–cysteine 99, cysteine 98–cysteine 112, and cysteine 142–cysteine 190. Asparagine 222 carries an N-linked (GlcNAc...) asparagine glycan. 6 disulfides stabilise this stretch: cysteine 233-cysteine 282, cysteine 317-cysteine 382, cysteine 325-cysteine 375, cysteine 366-cysteine 406, cysteine 394-cysteine 447, and cysteine 398-cysteine 434. Positions 312–450 (ESKGYCAQYR…HQDPTACTRL (139 aa)) constitute an FZ domain. The N-linked (GlcNAc...) asparagine glycan is linked to asparagine 338. An N-linked (GlcNAc...) asparagine glycan is attached at asparagine 459. Residues 495–515 (VIISIMSCFAVFALLTITTLY) traverse the membrane as a helical segment. The Cytoplasmic portion of the chain corresponds to 516-868 (CCRRRREWKN…CERAEGTVGV (353 aa)). Tyrosine 553 is subject to Phosphotyrosine; by autocatalysis. One can recognise a Protein kinase domain in the interval 574–855 (IEYVRDIGEG…PSFCSIHRIL (282 aa)). ATP contacts are provided by residues 580–588 (IGEGAFGRV) and lysine 608. Phosphoserine; by CK2 is present on residues serine 680 and serine 697. Catalysis depends on aspartate 724, which acts as the Proton acceptor. Tyrosine 754 bears the Phosphotyrosine; by autocatalysis mark.

This sequence belongs to the protein kinase superfamily. Tyr protein kinase family. As to quaternary structure, monomer. Homodimer. Interacts with LRP4; the heterodimer forms an AGRIN receptor complex that binds AGRIN resulting in activation of MUSK. Forms a heterotetramer composed of 2 DOK7 and 2 MUSK molecules which facilitates MUSK trans-autophosphorylation on tyrosine residue and activation. Interacts (via cytoplasmic part) with DOK7 (via IRS-type PTB domain); requires MUSK phosphorylation. Interacts with DVL1 (via DEP domain); the interaction is direct and mediates the formation of a DVL1, MUSK and PAK1 ternary complex involved in AChR clustering. Interacts with PDZRN3; this interaction is enhanced by agrin. Interacts with FNTA; the interaction is direct and mediates AGRIN-induced phosphorylation and activation of FNTA. Interacts with CSNK2B; mediates regulation by CK2. Interacts (via the cytoplasmic domain) with DNAJA3. Interacts with NSF; may regulate MUSK endocytosis and activity. Interacts with CAV3; may regulate MUSK signaling. Interacts with RNF31. Interacts with DOK7. Mg(2+) is required as a cofactor. In terms of processing, ubiquitinated by PDZRN3. Ubiquitination promotes endocytosis and lysosomal degradation. Post-translationally, phosphorylated. Phosphorylation is induced by AGRIN in a LRP4-dependent manner. Autophosphorylated. Autophosphorylation at Tyr-553 is required for interaction with DOK7 which in turn stimulates the phosphorylation and the activation of MUSK. Neddylated. In terms of tissue distribution, muscle specific.

It is found in the postsynaptic cell membrane. It carries out the reaction L-tyrosyl-[protein] + ATP = O-phospho-L-tyrosyl-[protein] + ADP + H(+). Positively regulated by CK2. Functionally, receptor tyrosine kinase which plays a central role in the formation and the maintenance of the neuromuscular junction (NMJ), the synapse between the motor neuron and the skeletal muscle. Recruitment of AGRIN by LRP4 to the MUSK signaling complex induces phosphorylation and activation of MUSK, the kinase of the complex. The activation of MUSK in myotubes regulates the formation of NMJs through the regulation of different processes including the specific expression of genes in subsynaptic nuclei, the reorganization of the actin cytoskeleton and the clustering of the acetylcholine receptors (AChR) in the postsynaptic membrane. May regulate AChR phosphorylation and clustering through activation of ABL1 and Src family kinases which in turn regulate MUSK. DVL1 and PAK1 that form a ternary complex with MUSK are also important for MUSK-dependent regulation of AChR clustering. May positively regulate Rho family GTPases through FNTA. Mediates the phosphorylation of FNTA which promotes prenylation, recruitment to membranes and activation of RAC1 a regulator of the actin cytoskeleton and of gene expression. Other effectors of the MUSK signaling include DNAJA3 which functions downstream of MUSK. May also play a role within the central nervous system by mediating cholinergic responses, synaptic plasticity and memory formation. This chain is Muscle, skeletal receptor tyrosine protein kinase (Musk), found in Rattus norvegicus (Rat).